The following is a 73-amino-acid chain: Translation initiation factor IF-1 (73 aa).

In terms of domain architecture, S1-like spans 1 to 73 (MSKKKDVIEM…TRGRITYRYK (73 aa)).

The protein belongs to the IF-1 family. In terms of assembly, component of the 30S ribosomal translation pre-initiation complex which assembles on the 30S ribosome in the order IF-2 and IF-3, IF-1 and N-formylmethionyl-tRNA(fMet); mRNA recruitment can occur at any time during PIC assembly.

The protein localises to the cytoplasm. One of the essential components for the initiation of protein synthesis. Stabilizes the binding of IF-2 and IF-3 on the 30S subunit to which N-formylmethionyl-tRNA(fMet) subsequently binds. Helps modulate mRNA selection, yielding the 30S pre-initiation complex (PIC). Upon addition of the 50S ribosomal subunit IF-1, IF-2 and IF-3 are released leaving the mature 70S translation initiation complex. In Chloroflexus aurantiacus (strain ATCC 29366 / DSM 635 / J-10-fl), this protein is Translation initiation factor IF-1.